A 447-amino-acid chain; its full sequence is Adenylosuccinate synthetase (447 aa).

Residues 12-18 (GDEGKGK) and 40-42 (GHT) each bind GTP. Asp13 (proton acceptor) is an active-site residue. Mg(2+) is bound by residues Asp13 and Gly40. IMP-binding positions include 13–16 (DEGK), 38–41 (NAGH), Thr128, Arg142, Gln223, Thr238, and Arg302. The active-site Proton donor is the His41. 298-304 (TTTGRKR) lines the substrate pocket. GTP contacts are provided by residues Arg304, 330–332 (KLD), and 412–414 (SLG).

The protein belongs to the adenylosuccinate synthetase family. Homodimer. Mg(2+) serves as cofactor.

It localises to the cytoplasm. It carries out the reaction IMP + L-aspartate + GTP = N(6)-(1,2-dicarboxyethyl)-AMP + GDP + phosphate + 2 H(+). It participates in purine metabolism; AMP biosynthesis via de novo pathway; AMP from IMP: step 1/2. Functionally, plays an important role in the de novo pathway of purine nucleotide biosynthesis. Catalyzes the first committed step in the biosynthesis of AMP from IMP. The chain is Adenylosuccinate synthetase from Nostoc punctiforme (strain ATCC 29133 / PCC 73102).